The primary structure comprises 234 residues: 2,3,4,5-tetrahydropyridine-2,6-dicarboxylate N-acetyltransferase (234 aa).

Belongs to the transferase hexapeptide repeat family. DapH subfamily.

It catalyses the reaction (S)-2,3,4,5-tetrahydrodipicolinate + acetyl-CoA + H2O = L-2-acetamido-6-oxoheptanedioate + CoA. The protein operates within amino-acid biosynthesis; L-lysine biosynthesis via DAP pathway; LL-2,6-diaminopimelate from (S)-tetrahydrodipicolinate (acetylase route): step 1/3. Its function is as follows. Catalyzes the transfer of an acetyl group from acetyl-CoA to tetrahydrodipicolinate. The chain is 2,3,4,5-tetrahydropyridine-2,6-dicarboxylate N-acetyltransferase from Leuconostoc citreum (strain KM20).